Here is a 363-residue protein sequence, read N- to C-terminus: MSHEVPNAIDVRNAVKRYGDFTALKTISLSIRDNEFFTLLGPSGCGKTTLLRMIAGFEDVTEGEIFLYGEEIEDLPPNRRPVNTVFQNYALFPHMDVMENVGFGLEMLGKPKAQARARAGEILELVQLSQFANRKPSQLSGGQQQRVALARALAPQPKVLLLDEPLSALDLKLRKAMQLELKHLQRETGITFIFVTHDQDEALTMSDRIAVMSAGELQQLGDARDIYEKPANRFVADFIGETNLFEVTIKSRDGTRVLCAFLNGLTLTCDAVAGMDVGDRVHMSIRPERIKLRSSKVETENFQAQVVENIYAGTDVQTIVHLQGGMPLAVRTQNSEIGRSMTFEPGAEVFVDVEFGSARLLAN.

An ABC transporter domain is found at 9-239 (IDVRNAVKRY…PANRFVADFI (231 aa)). 41–48 (GPSGCGKT) is an ATP binding site.

It belongs to the ABC transporter superfamily. Spermidine/putrescine importer (TC 3.A.1.11.1) family. As to quaternary structure, the complex is composed of two ATP-binding proteins (PotA), two transmembrane proteins (PotB and PotC) and a solute-binding protein (PotD).

It is found in the cell inner membrane. The catalysed reaction is ATP + H2O + polyamine-[polyamine-binding protein]Side 1 = ADP + phosphate + polyamineSide 2 + [polyamine-binding protein]Side 1.. Functionally, part of the ABC transporter complex PotABCD involved in spermidine/putrescine import. Responsible for energy coupling to the transport system. The protein is Spermidine/putrescine import ATP-binding protein PotA of Roseobacter denitrificans (strain ATCC 33942 / OCh 114) (Erythrobacter sp. (strain OCh 114)).